Reading from the N-terminus, the 238-residue chain is Endonuclease III homolog (238 aa).

In terms of domain architecture, HhH spans R129–M155. K149 functions as the Nucleophile; for N-glycosylase activity in the catalytic mechanism. Residues C217, C224, C227, and C233 each contribute to the [4Fe-4S] cluster site.

Belongs to the Nth/MutY family. [4Fe-4S] cluster is required as a cofactor.

The protein localises to the nucleus. The protein resides in the mitochondrion. It catalyses the reaction 2'-deoxyribonucleotide-(2'-deoxyribose 5'-phosphate)-2'-deoxyribonucleotide-DNA = a 3'-end 2'-deoxyribonucleotide-(2,3-dehydro-2,3-deoxyribose 5'-phosphate)-DNA + a 5'-end 5'-phospho-2'-deoxyribonucleoside-DNA + H(+). Bifunctional DNA N-glycosylase with associated apurinic/apyrimidinic (AP) lyase function that catalyzes the first step in base excision repair (BER), the primary repair pathway for the repair of oxidative DNA damage. The DNA N-glycosylase activity releases the damaged DNA base from DNA by cleaving the N-glycosidic bond, leaving an AP site. The AP lyase activity cleaves the phosphodiester bond 3' to the AP site by a beta-elimination. Primarily recognizes and repairs oxidative base damage of pyrimidines. The chain is Endonuclease III homolog from Encephalitozoon cuniculi (strain GB-M1) (Microsporidian parasite).